The sequence spans 214 residues: Adenylate kinase (214 aa).

10–15 (GAGKGT) lines the ATP pocket. The segment at 30–59 (STGDMLRAAIKAGTELGKQAKSVIDAGQLV) is NMP. AMP contacts are provided by residues threonine 31, arginine 36, 57–59 (QLV), 85–88 (GFPR), and glutamine 92. The LID stretch occupies residues 122 to 159 (GRRAHLPSGRTYHNVYNPPKEEGKDDITGEELVVRDDD). ATP contacts are provided by residues arginine 123 and 132 to 133 (TY). The AMP site is built by arginine 156 and arginine 167. Position 200 (lysine 200) interacts with ATP.

Belongs to the adenylate kinase family. Monomer.

The protein localises to the cytoplasm. It carries out the reaction AMP + ATP = 2 ADP. Its pathway is purine metabolism; AMP biosynthesis via salvage pathway; AMP from ADP: step 1/1. Catalyzes the reversible transfer of the terminal phosphate group between ATP and AMP. Plays an important role in cellular energy homeostasis and in adenine nucleotide metabolism. The protein is Adenylate kinase of Vibrio atlanticus (strain LGP32) (Vibrio splendidus (strain Mel32)).